Reading from the N-terminus, the 426-residue chain is Histidine--tRNA ligase (426 aa).

The protein belongs to the class-II aminoacyl-tRNA synthetase family. In terms of assembly, homodimer.

The protein resides in the cytoplasm. It catalyses the reaction tRNA(His) + L-histidine + ATP = L-histidyl-tRNA(His) + AMP + diphosphate + H(+). This chain is Histidine--tRNA ligase, found in Streptococcus pyogenes serotype M3 (strain ATCC BAA-595 / MGAS315).